A 303-amino-acid polypeptide reads, in one-letter code: Nucleotide-binding protein SAR0820 (303 aa).

An ATP-binding site is contributed by 18–25 (GLSGAGKS). Residue 69 to 72 (DLRG) coordinates GTP.

It belongs to the RapZ-like family.

Functionally, displays ATPase and GTPase activities. This Staphylococcus aureus (strain MRSA252) protein is Nucleotide-binding protein SAR0820.